Here is a 74-residue protein sequence, read N- to C-terminus: Tetrahydromethanopterin S-methyltransferase subunit G (74 aa).

The helical transmembrane segment at 47–67 (VGIAYGLAIGFIFVYVLGTVL) threads the bilayer.

The protein belongs to the MtrG family. In terms of assembly, the complex is composed of 8 subunits; MtrA, MtrB, MtrC, MtrD, MtrE, MtrF, MtrG and MtrH.

The protein resides in the cell membrane. The catalysed reaction is 5-methyl-5,6,7,8-tetrahydromethanopterin + coenzyme M + 2 Na(+)(in) = 5,6,7,8-tetrahydromethanopterin + methyl-coenzyme M + 2 Na(+)(out). Its pathway is one-carbon metabolism; methanogenesis from CO(2); methyl-coenzyme M from 5,10-methylene-5,6,7,8-tetrahydromethanopterin: step 2/2. Its function is as follows. Part of a complex that catalyzes the formation of methyl-coenzyme M and tetrahydromethanopterin from coenzyme M and methyl-tetrahydromethanopterin. This is an energy-conserving, sodium-ion translocating step. In Methanococcus maripaludis (strain DSM 14266 / JCM 13030 / NBRC 101832 / S2 / LL), this protein is Tetrahydromethanopterin S-methyltransferase subunit G.